The primary structure comprises 92 residues: Non-specific lipid-transfer protein B (92 aa).

4 disulfide bridges follow: Cys3/Cys51, Cys13/Cys28, Cys29/Cys74, and Cys49/Cys88.

The protein belongs to the plant LTP family.

Plant non-specific lipid-transfer proteins transfer phospholipids as well as galactolipids across membranes. May play a role in wax or cutin deposition in the cell walls of expanding epidermal cells and certain secretory tissues. In Ricinus communis (Castor bean), this protein is Non-specific lipid-transfer protein B.